The primary structure comprises 35 residues: Conotoxin TxMEKL-0422 (35 aa).

The tract at residues 1–35 (NPASCCSCADVDPGRASRKTPKGEDQVFIKEKDRC) is disordered. Over residues 21–35 (PKGEDQVFIKEKDRC) the composition is skewed to basic and acidic residues.

In terms of processing, contains disulfide bonds. As to expression, expressed by the venom duct.

The protein localises to the secreted. This chain is Conotoxin TxMEKL-0422, found in Conus textile (Cloth-of-gold cone).